The chain runs to 1198 residues: Phosphatidylinositol-3,5-bisphosphate 3-phosphatase MTMR3 (1198 aa).

Ser8 carries the post-translational modification Phosphoserine. A Myotubularin phosphatase domain is found at 155 to 576 (EHVTSRFKNE…RNLMLWSAVY (422 aa)). A compositionally biased stretch (polar residues) spans 265-280 (SRSSGSKLSTRNTSRD). The tract at residues 265–285 (SRSSGSKLSTRNTSRDFPNGG) is disordered. The a 1,2-diacyl-sn-glycero-3-phospho-(1D-myo-inositol-3,5-bisphosphate) site is built by Asn326, Asn351, and Ile352. A 1,2-diacyl-sn-glycero-3-phospho-(1D-myo-inositol-3-phosphate) is bound by residues Asn326, Asn351, and Ile352. Cys413 acts as the Phosphocysteine intermediate in catalysis. The a 1,2-diacyl-sn-glycero-3-phospho-(1D-myo-inositol-3,5-bisphosphate) site is built by Ser414, Asp415, Gly416, Trp417, Asp418, Arg419, Lys455, and Arg459. The a 1,2-diacyl-sn-glycero-3-phospho-(1D-myo-inositol-3-phosphate) site is built by Ser414, Asp415, Gly416, Trp417, Asp418, and Arg419. Arg459 is an a 1,2-diacyl-sn-glycero-3-phospho-(1D-myo-inositol-3-phosphate) binding site. The disordered stretch occupies residues 590–612 (CAPYPAPGTSPDDPPLSRLPKTR). Over residues 593 to 603 (YPAPGTSPDDP) the composition is skewed to pro residues. Ser613, Ser633, Ser647, and Ser651 each carry phosphoserine. Disordered stretches follow at residues 650–669 (LSSL…LGKP), 716–735 (EGKE…PEAS), and 855–891 (KSVS…SLVE). Residues 716-732 (EGKEDPLLEKESRRKTP) show a composition bias toward basic and acidic residues. Phosphothreonine is present on Thr731. Phosphoserine occurs at positions 906 and 909. Disordered regions lie at residues 933–974 (ETEN…SRQL) and 993–1019 (WLHS…DDDG). Residues 999 to 1010 (GRPSATSSPDQP) show a composition bias toward polar residues. Positions 1029–1062 (QRLRQIESGHQQEVETLKKQVQELKSRLESQYLT) form a coiled coil. At Ser1064 the chain carries Phosphoserine. The FYVE-type zinc-finger motif lies at 1119-1179 (DHLAAHCYAC…VCKSCYSSLH (61 aa)). The Zn(2+) site is built by Cys1125, Cys1128, Cys1141, Cys1144, Cys1149, Cys1152, Cys1171, and Cys1174.

Belongs to the protein-tyrosine phosphatase family. Non-receptor class myotubularin subfamily. In terms of assembly, forms heterodimers with MTMR4 that recruit both CEP55 and PLK1; occurs during early mitosis, regulates the phosphorylation of CEP55 by PLK1 and its recruitment to the midbody where it mediates cell abscission. Phosphorylated by CDK1 during mitosis.

Its subcellular location is the cytoplasm. The protein resides in the cytosol. It is found in the membrane. It catalyses the reaction a 1,2-diacyl-sn-glycero-3-phospho-(1D-myo-inositol-3,5-bisphosphate) + H2O = a 1,2-diacyl-sn-glycero-3-phospho-(1D-myo-inositol-5-phosphate) + phosphate. It carries out the reaction a 1,2-diacyl-sn-glycero-3-phospho-(1D-myo-inositol-3-phosphate) + H2O = a 1,2-diacyl-sn-glycero-3-phospho-(1D-myo-inositol) + phosphate. The catalysed reaction is 1,2-dihexadecanoyl-sn-glycero-3-phospho-(1D-myo-inositol-3-phosphate) + H2O = 1,2-dihexadecanoyl-sn-glycero-3-phospho-(1D-myo-inositol) + phosphate. The enzyme catalyses 1,2-dioctanoyl-sn-glycero-3-phospho-(1-D-myo-inositol-3-phosphate) + H2O = 1,2-dioctanoyl-sn-glycero-3-phospho-(1D-myo-inositol) + phosphate. It catalyses the reaction 1,2-dihexadecanoyl-sn-glycero-3-phospho-(1D-myo-inositol-3,5-phosphate) + H2O = 1,2-dihexadecanoyl-sn-glycero-3-phospho-(1D-myo-inositol-5-phosphate) + phosphate. Its function is as follows. Lipid phosphatase that specifically dephosphorylates the D-3 position of phosphatidylinositol 3-phosphate and phosphatidylinositol 3,5-bisphosphate, generating phosphatidylinositol and phosphatidylinositol 5-phosphate. Decreases the levels of phosphatidylinositol 3-phosphate, a phospholipid found in cell membranes where it acts as key regulator of both cell signaling and intracellular membrane traffic. Could also have a molecular sequestering/adapter activity and regulate biological processes independently of its phosphatase activity. It includes the regulation of midbody abscission during mitotic cytokinesis. This chain is Phosphatidylinositol-3,5-bisphosphate 3-phosphatase MTMR3, found in Homo sapiens (Human).